A 110-amino-acid chain; its full sequence is Insulin (110 aa).

The signal sequence occupies residues 1–24; the sequence is MASLAALLPLLALLVLCRLDPAQA. Cystine bridges form between Cys-31–Cys-96, Cys-43–Cys-109, and Cys-95–Cys-100. Positions 57–87 are cleaved as a propeptide — c peptide; sequence EVEELQVGQAELGGGPGAGGLQPSALELALQ.

This sequence belongs to the insulin family. In terms of assembly, heterodimer of a B chain and an A chain linked by two disulfide bonds.

It is found in the secreted. Insulin decreases blood glucose concentration. It increases cell permeability to monosaccharides, amino acids and fatty acids. It accelerates glycolysis, the pentose phosphate cycle, and glycogen synthesis in liver. The chain is Insulin (INS) from Oryctolagus cuniculus (Rabbit).